The chain runs to 168 residues: tRNA (cytidine(56)-2'-O)-methyltransferase (168 aa).

S-adenosyl-L-methionine is bound by residues Leu-79 and 104-108; that span reads GAEKV.

It belongs to the aTrm56 family. In terms of assembly, homodimer.

It localises to the cytoplasm. The catalysed reaction is cytidine(56) in tRNA + S-adenosyl-L-methionine = 2'-O-methylcytidine(56) in tRNA + S-adenosyl-L-homocysteine + H(+). Its function is as follows. Specifically catalyzes the AdoMet-dependent 2'-O-ribose methylation of cytidine at position 56 in tRNAs. This is tRNA (cytidine(56)-2'-O)-methyltransferase from Archaeoglobus fulgidus (strain ATCC 49558 / DSM 4304 / JCM 9628 / NBRC 100126 / VC-16).